A 154-amino-acid polypeptide reads, in one-letter code: Protein X (154 aa).

The mitochondrial targeting sequence stretch occupies residues 68–117 (PCALRFTSARRMETTVNAHQILPKVLHKRTLGLSAMSTTDLEAYFKDCLF).

This sequence belongs to the orthohepadnavirus protein X family. May form homodimer. May interact with host CEBPA, CFLAR, CREB1, DDB1, E4F1, HBXIP, HSPD1/HSP60, NFKBIA, POLR2E and SMAD4. Interacts with host SMC5-SMC6 complex and induces its degradation. Interacts with host TRPC4AP; leading to prevent ubiquitination of TRPC4AP. Interacts with host PLSCR1; this interaction promotes ubiquitination and degradation of HBx and impairs HBx-mediated cell proliferation. Post-translationally, a fraction may be phosphorylated in insect cells and HepG2 cells, a human hepatoblastoma cell line. Phosphorylated in vitro by host protein kinase C or mitogen-activated protein kinase. N-acetylated in insect cells.

The protein localises to the host cytoplasm. It is found in the host nucleus. The protein resides in the host mitochondrion. Its function is as follows. Multifunctional protein that plays a role in silencing host antiviral defenses and promoting viral transcription. Does not seem to be essential for HBV infection. May be directly involved in development of cirrhosis and liver cancer (hepatocellular carcinoma). Most of cytosolic activities involve modulation of cytosolic calcium. The effect on apoptosis is controversial depending on the cell types in which the studies have been conducted. May induce apoptosis by localizing in mitochondria and causing loss of mitochondrial membrane potential. May also modulate apoptosis by binding host CFLAR, a key regulator of the death-inducing signaling complex (DISC). Promotes viral transcription by using the host E3 ubiquitin ligase DDB1 to target the SMC5-SMC6 complex to proteasomal degradation. This host complex would otherwise bind to viral episomal DNA, and prevents its transcription. Moderately stimulates transcription of many different viral and cellular transcription elements. Promoters and enhancers stimulated by HBx contain DNA binding sites for NF-kappa-B, AP-1, AP-2, c-EBP, ATF/CREB, or the calcium-activated factor NF-AT. The polypeptide is Protein X (Hepatitis B virus genotype E subtype ayw4 (isolate Kou) (HBV-E)).